Consider the following 299-residue polypeptide: Small ribosomal subunit biogenesis GTPase RsgA (299 aa).

One can recognise a CP-type G domain in the interval 64–225 (KNEMIRPPVA…VGDTPGFSSL (162 aa)). Residues 113–116 (TKTD) and 168–176 (GQTGAGKST) contribute to the GTP site. Zn(2+)-binding residues include Cys-249, Cys-254, His-256, and Cys-262.

The protein belongs to the TRAFAC class YlqF/YawG GTPase family. RsgA subfamily. In terms of assembly, monomer. Associates with 30S ribosomal subunit, binds 16S rRNA. Requires Zn(2+) as cofactor.

It is found in the cytoplasm. Functionally, one of several proteins that assist in the late maturation steps of the functional core of the 30S ribosomal subunit. Helps release RbfA from mature subunits. May play a role in the assembly of ribosomal proteins into the subunit. Circularly permuted GTPase that catalyzes slow GTP hydrolysis, GTPase activity is stimulated by the 30S ribosomal subunit. The protein is Small ribosomal subunit biogenesis GTPase RsgA of Latilactobacillus sakei subsp. sakei (strain 23K) (Lactobacillus sakei subsp. sakei).